We begin with the raw amino-acid sequence, 274 residues long: 2,3,4,5-tetrahydropyridine-2,6-dicarboxylate N-succinyltransferase (274 aa).

Positions 106 and 143 each coordinate substrate.

It belongs to the transferase hexapeptide repeat family. As to quaternary structure, homotrimer.

The protein localises to the cytoplasm. It catalyses the reaction (S)-2,3,4,5-tetrahydrodipicolinate + succinyl-CoA + H2O = (S)-2-succinylamino-6-oxoheptanedioate + CoA. The protein operates within amino-acid biosynthesis; L-lysine biosynthesis via DAP pathway; LL-2,6-diaminopimelate from (S)-tetrahydrodipicolinate (succinylase route): step 1/3. The protein is 2,3,4,5-tetrahydropyridine-2,6-dicarboxylate N-succinyltransferase of Acidovorax sp. (strain JS42).